We begin with the raw amino-acid sequence, 317 residues long: Beta-ketoacyl-[acyl-carrier-protein] synthase III (317 aa).

Active-site residues include cysteine 112 and histidine 244. Positions 245–249 are ACP-binding; it reads QANIR. Residue asparagine 274 is part of the active site.

This sequence belongs to the thiolase-like superfamily. FabH family. In terms of assembly, homodimer.

It localises to the cytoplasm. It carries out the reaction malonyl-[ACP] + acetyl-CoA + H(+) = 3-oxobutanoyl-[ACP] + CO2 + CoA. The protein operates within lipid metabolism; fatty acid biosynthesis. Its function is as follows. Catalyzes the condensation reaction of fatty acid synthesis by the addition to an acyl acceptor of two carbons from malonyl-ACP. Catalyzes the first condensation reaction which initiates fatty acid synthesis and may therefore play a role in governing the total rate of fatty acid production. Possesses both acetoacetyl-ACP synthase and acetyl transacylase activities. Its substrate specificity determines the biosynthesis of branched-chain and/or straight-chain of fatty acids. The protein is Beta-ketoacyl-[acyl-carrier-protein] synthase III of Rickettsia prowazekii (strain Madrid E).